Here is a 98-residue protein sequence, read N- to C-terminus: Integration host factor subunit beta (98 aa).

It belongs to the bacterial histone-like protein family. In terms of assembly, heterodimer of an alpha and a beta chain.

This protein is one of the two subunits of integration host factor, a specific DNA-binding protein that functions in genetic recombination as well as in transcriptional and translational control. The sequence is that of Integration host factor subunit beta from Pseudomonas fluorescens (strain SBW25).